Reading from the N-terminus, the 494-residue chain is MLSLNQLTEVMKVANKKREKFREMEHRFYHCCKKCSQAIGVFEENQETYKVVAMMCLDQVGIPVKTDTEKESTMLEFIRFFDNPRAAIKIPDRIVELTKEHMDDKEFLIDAVHNGRVKHSTVEMTKKKKADLLEVLMDPGKNNKKEDGDDPTLFFSINDMDQLLEGDDIIDMEEECEGDEDDVNAKGYDDLYDKKQKELYKKIETGMITVVRLHEMCNDLGIGDYFELILSATEFPCVICDLSILYEFRACFFDLINMSRMAASKVNLNRIKKPGKLFSKAIKNKTNAGCKPLVKGQFLGEKTELEITKRLDEVELTPKQLVDYSIFKCLGGGEDMMKTMAQLDKNNKMEDYGYNFFAEEISPPVLLRCMEGEWLDKFPFMRSIIDRIKDVALSHALPRKRIFCYINPRIMACECNIYETVRSRCLLGVKISLVNTMLKVMKRSQTKTILNQVSSICKEHGIAYEICNIHINKTMKEDKKIIKERLARKRSHPN.

This is an uncharacterized protein from Magallana gigas (Pacific oyster).